The sequence spans 32 residues: Cyclotide Hyfl-B (32 aa).

Positions Gly1–Asn32 form a cross-link, cyclopeptide (Gly-Asn). 3 disulfides stabilise this stretch: Cys6/Cys22, Cys10/Cys24, and Cys15/Cys29.

The protein belongs to the cyclotide family. Moebius subfamily. Post-translationally, this is a cyclic peptide.

Its function is as follows. Probably participates in a plant defense mechanism. The chain is Cyclotide Hyfl-B from Hybanthus floribundus (Greenviolet).